The following is a 255-amino-acid chain: MSLDLSTSLSPARPLESADAMEERLREIGAARYHDRHPFHHMLHGGELTRGQVQAWALNRYYYQCTIPVKDAVVISRFRDRATRIEWRHRLEDHDGAEGAEGGIDRWLILTDGLGLDRAYVESTEGILPATRFAVEAYVHFVRDRSPLEAIASCLTELFAPNIHATRISGMLSHYDFINPTVMAYFQRRLTQAPRDADYALRYVREHARTPEERAAVCNALIFKTQVLWTQLDALHHAYVLGHVPPGAFVPEEMR.

This sequence belongs to the PqqC family.

It catalyses the reaction 6-(2-amino-2-carboxyethyl)-7,8-dioxo-1,2,3,4,7,8-hexahydroquinoline-2,4-dicarboxylate + 3 O2 = pyrroloquinoline quinone + 2 H2O2 + 2 H2O + H(+). Its pathway is cofactor biosynthesis; pyrroloquinoline quinone biosynthesis. Functionally, ring cyclization and eight-electron oxidation of 3a-(2-amino-2-carboxyethyl)-4,5-dioxo-4,5,6,7,8,9-hexahydroquinoline-7,9-dicarboxylic-acid to PQQ. The sequence is that of Pyrroloquinoline-quinone synthase from Cereibacter sphaeroides (strain KD131 / KCTC 12085) (Rhodobacter sphaeroides).